A 276-amino-acid polypeptide reads, in one-letter code: Large ribosomal subunit protein uL2 (276 aa).

2 disordered regions span residues 1–50 (MPIK…GRVT) and 206–276 (GKAG…SKKR). A compositionally biased stretch (polar residues) spans 7-19 (RPTTPTRRFQTVV). Residues 20-38 (SREDITKQTPEKSLVESKK) are compositionally biased toward basic and acidic residues.

Belongs to the universal ribosomal protein uL2 family. As to quaternary structure, part of the 50S ribosomal subunit. Forms a bridge to the 30S subunit in the 70S ribosome.

One of the primary rRNA binding proteins. Required for association of the 30S and 50S subunits to form the 70S ribosome, for tRNA binding and peptide bond formation. It has been suggested to have peptidyltransferase activity; this is somewhat controversial. Makes several contacts with the 16S rRNA in the 70S ribosome. In Solibacter usitatus (strain Ellin6076), this protein is Large ribosomal subunit protein uL2.